Here is a 426-residue protein sequence, read N- to C-terminus: Zinc finger CCCH domain-containing protein 13 (426 aa).

A C3H1-type zinc finger spans residues 10–36; the sequence is AYKTKLCALWQRGNCNRDTCSFAHGHG. Disordered regions lie at residues 34 to 155, 253 to 317, and 390 to 426; these read GHGD…HEKQ, NEEG…DKTS, and NDAD…VDVE. Composition is skewed to basic and acidic residues over residues 54–70, 78–101, and 108–120; these read RRDY…DRRF, PGRE…RDSS, and RKSE…KTDD. A compositionally biased stretch (low complexity) spans 124 to 133; it reads NSSRSLSLSD. The segment covering 135–155 has biased composition (basic and acidic residues); it reads NDEKKKDKFSSGDEKEDHEKQ. The stretch at 144 to 245 forms a coiled coil; it reads SSGDEKEDHE…FERLGDLLAS (102 aa). Polar residues predominate over residues 255–272; it reads EGSSVNEDLNERSPNTAA. Basic and acidic residues predominate over residues 284-317; sequence EEAKAVKKRRERDSDTMTRSDKYRSDVTDFDKTS. Positions 416–426 are enriched in acidic residues; sequence YEGDDEEVDVE.

The polypeptide is Zinc finger CCCH domain-containing protein 13 (Oryza sativa subsp. japonica (Rice)).